Consider the following 458-residue polypeptide: 5'-adenylylsulfate reductase 3, chloroplastic (458 aa).

A disordered region spans residues Met-1–Asp-24. The transit peptide at Met-1 to Val-69 directs the protein to the chloroplast. The segment covering Ser-8–Ser-23 has biased composition (low complexity). The tract at residues Ala-70–Gly-319 is reductase domain. The 122-residue stretch at Ala-337–Arg-458 folds into the Thioredoxin domain. Active-site nucleophile residues include Cys-378 and Cys-381. A disulfide bridge links Cys-378 with Cys-381.

Belongs to the APS reductase family. [4Fe-4S] cluster is required as a cofactor. In terms of tissue distribution, leaves, roots and stem.

It is found in the plastid. The protein resides in the chloroplast. It carries out the reaction glutathione disulfide + sulfite + AMP + 2 H(+) = adenosine 5'-phosphosulfate + 2 glutathione. Stimulated by sodium sulfate &gt; ammonium sulfate. Its function is as follows. Reduces sulfate for Cys biosynthesis. Substrate preference is adenosine-5'-phosphosulfate (APS) &gt;&gt; 3'-phosphoadenosine-5'-phosphosulfate (PAPS). Uses glutathione or DTT as source of protons. The chain is 5'-adenylylsulfate reductase 3, chloroplastic (APR3) from Arabidopsis thaliana (Mouse-ear cress).